Reading from the N-terminus, the 504-residue chain is Endosomal/lysosomal proton channel TMEM175 (504 aa).

The segment at 1–27 (MSQPRTPEQALDTPGDCPPGRRDEDAG) is disordered. The Cytoplasmic segment spans residues 1–33 (MSQPRTPEQALDTPGDCPPGRRDEDAGEGIQCS). T6 bears the Phosphothreonine mark. Residues 34–56 (QRMLSFSDALLSIIATVMILPVT) traverse the membrane as a helical segment. Positions 35–41 (RMLSFSD) match the RxxxFSD motif 1 motif. Residues 57 to 77 (HTEISPEQQFDRSVQRLLATR) are Lumenal-facing. Residues 58–63 (TEISPE) are short helix H1-1. Positions 65–71 (QFDRSVQ) are short helix H2-1. A helical membrane pass occupies residues 78 to 100 (IAVYLMTFLIVTVAWAAHTRLFQ). The Cytoplasmic portion of the chain corresponds to 101–106 (VVGKTD). A helical membrane pass occupies residues 107-128 (DTLALLNLACMMTITFLPYTFS). Over 129–138 (LMVTFPDVPL) the chain is Lumenal. The helical transmembrane segment at 139–160 (GIFLFCVCVIAIGVVQALIVGY) threads the bilayer. Over 161–184 (AFHFPHLLSPQIQRSAHRALYRRH) the chain is Cytoplasmic. A helical membrane pass occupies residues 185–205 (VLGIVLQGPALCFAAAIFSLF). The Lumenal portion of the chain corresponds to 206–210 (FVPLS). The chain crosses the membrane as a helical span at residues 211-230 (YLLMVTVILLPYVSKVTGWC). Topologically, residues 231-257 (RDRLLGHREPSAHPVEVFSFDLHEPLS) are cytoplasmic. A helical membrane pass occupies residues 258–282 (KERVEAFSDGVYAIVATLLILDICE). The short motif at 260–266 (RVEAFSD) is the RxxxFSD motif 2 element. Residues 283–309 (DNVPDPKDVKERFSGSLVAALSATGPR) lie on the Lumenal side of the membrane. A short helix H1-2 region spans residues 288 to 296 (PKDVKERFS). The tract at residues 298–304 (SLVAALS) is short helix H2-2. A helical transmembrane segment spans residues 310-332 (FLAYFGSFATVGLLWFAHHSLFL). The Cytoplasmic segment spans residues 333–338 (HVRKAT). Residues 339–360 (RAMGLLNTLSLAFVGGLPLAYQ) form a helical membrane-spanning segment. At 361 to 375 (QTSAFARQPRDELER) the chain is on the lumenal side. The chain crosses the membrane as a helical span at residues 376–396 (VRVSCTIIFLASIFQLAMWTT). At 397 to 416 (ALLHQAETLQPSVWFGGREH) the chain is on the cytoplasmic side. The chain crosses the membrane as a helical span at residues 417–440 (VLMFAKLALYPCASLLAFASTCLL). The Lumenal segment spans residues 441–442 (SR). Residues 443 to 469 (FSVGIFHLMQIAVPCAFLLLRLLVGLA) traverse the membrane as a helical segment. Topologically, residues 470 to 504 (LATLRVLRGLARPEHPPPAPTGQDDPQSQLLPAPC) are cytoplasmic. Residues 483–504 (EHPPPAPTGQDDPQSQLLPAPC) are disordered. A compositionally biased stretch (polar residues) spans 493–504 (DDPQSQLLPAPC).

Belongs to the TMEM175 family. Homodimer. Interacts with AKT (AKT1, AKT2 or AKT3); leading to formation of the lysoK(GF) complex, which activates the channel. Interacts with LAMP1; inhibiting the proton channel activity of TMEM175. Interacts with LAMP2; inhibiting the proton channel activity of TMEM175. As to expression, widely expressed.

It is found in the endosome membrane. The protein localises to the lysosome membrane. The enzyme catalyses H(+)(in) = H(+)(out). It carries out the reaction K(+)(in) = K(+)(out). Its activity is regulated as follows. Active at low pH (under pH 4.6): proton channel activity is activated by luminal side protons. Polyunsaturated fatty acids, such as arachidonic acid, also activate the channel activity. Proton channel activity is directly inhibited by LAMP1 or LAMP2, facilitating lysosomal acidification. Channel activity is activated following interaction with AKT (AKT1, AKT2 or AKT3): interaction promotes activation from closed to an open state. Activation by AKT is independent of AKT serine/threonine-protein kinase activity. Proton-activated proton channel that catalyzes proton efflux from endosomes and lysosomes to maintain a steady-state pH. Activated at low pH (under pH 4.6) by luminal side protons: selectively mediates lysosomal proton release from lysosomes, eliciting a proton leak that balances V-ATPase activity to maintain pH homeostasis. Regulation of lumenal pH stability is required for autophagosome-lysosome fusion. Also acts as a potassium channel at higher pH, regulating potassium conductance in endosomes and lysosomes. Constitutes the pore-forming subunit of the lysoK(GF) complex, a complex activated by extracellular growth factors. The lysoK(GF) complex is composed of TMEM175 and AKT (AKT1, AKT2 or AKT3), a major target of growth factor receptors: in the complex, TMEM175 channel is opened by conformational changes by AKT, leading to its activation. The lysoK(GF) complex is required to protect neurons against stress-induced damage. The protein is Endosomal/lysosomal proton channel TMEM175 of Homo sapiens (Human).